Here is a 347-residue protein sequence, read N- to C-terminus: Extracellular metalloprotease (347 aa).

The signal sequence occupies residues 1–20 (MKSRPICSVIPPYILHRIIA). The tract at residues 43–68 (SHHPRPEPHEKLPAGQANRSIHDAEQ) is disordered. Zn(2+) is bound at residue histidine 162. The active site involves glutamate 163. Positions 166 and 186 each coordinate Zn(2+). The Proton donor role is filled by histidine 264.

It belongs to the peptidase M4 family. It depends on Ca(2+) as a cofactor. The cofactor is Zn(2+).

Its subcellular location is the secreted. The protein is Extracellular metalloprotease (prt1) of Pectobacterium carotovorum subsp. carotovorum (Erwinia carotovora subsp. carotovora).